A 60-amino-acid polypeptide reads, in one-letter code: Large ribosomal subunit protein bL32 (60 aa).

A disordered region spans residues 1–43 (MAVQQNKKSPSKRGMHRSHDALTNPPLAIEPTTGEIHLRHHIS).

Belongs to the bacterial ribosomal protein bL32 family.

The protein is Large ribosomal subunit protein bL32 of Nitrosomonas europaea (strain ATCC 19718 / CIP 103999 / KCTC 2705 / NBRC 14298).